Consider the following 325-residue polypeptide: DNA-directed RNA polymerase subunit alpha (325 aa).

Residues 1 to 231 (MQNSLLKPRI…DQLNVFAALE (231 aa)) form an alpha N-terminal domain (alpha-NTD) region. The interval 246 to 325 (VDPILLRPVD…ENWPPAGLEK (80 aa)) is alpha C-terminal domain (alpha-CTD).

The protein belongs to the RNA polymerase alpha chain family. Homodimer. The RNAP catalytic core consists of 2 alpha, 1 beta, 1 beta' and 1 omega subunit. When a sigma factor is associated with the core the holoenzyme is formed, which can initiate transcription.

The enzyme catalyses RNA(n) + a ribonucleoside 5'-triphosphate = RNA(n+1) + diphosphate. In terms of biological role, DNA-dependent RNA polymerase catalyzes the transcription of DNA into RNA using the four ribonucleoside triphosphates as substrates. In Janthinobacterium sp. (strain Marseille) (Minibacterium massiliensis), this protein is DNA-directed RNA polymerase subunit alpha.